Reading from the N-terminus, the 189-residue chain is Ornithine decarboxylase antizyme 2 (189 aa).

Residue S186 is modified to Phosphoserine.

It belongs to the ODC antizyme family. Interacts with ODC1 and thereby sterically blocks ODC homodimerization. Interacts with AZIN2; this interaction disrupts the interaction between the antizyme and ODC1.

Its subcellular location is the nucleus. Its function is as follows. Ornithine decarboxylase (ODC) antizyme protein that negatively regulates ODC activity and intracellular polyamine biosynthesis and uptake in response to increased intracellular polyamine levels. Binds to ODC monomers, inhibiting the assembly of the functional ODC homodimers. Does not target the ODC monomers for degradation, which allows a protein synthesis-independent restoration of ODC activity. Involved in the translocation of AZIN2 from ER-Golgi intermediate compartment (ERGIC) to the cytosol. The protein is Ornithine decarboxylase antizyme 2 (Oaz2) of Mus musculus (Mouse).